We begin with the raw amino-acid sequence, 181 residues long: Large ribosomal subunit protein uL5 (181 aa).

It belongs to the universal ribosomal protein uL5 family. As to quaternary structure, part of the 50S ribosomal subunit; part of the 5S rRNA/L5/L18/L25 subcomplex. Contacts the 5S rRNA and the P site tRNA. Forms a bridge to the 30S subunit in the 70S ribosome.

Functionally, this is one of the proteins that bind and probably mediate the attachment of the 5S RNA into the large ribosomal subunit, where it forms part of the central protuberance. In the 70S ribosome it contacts protein S13 of the 30S subunit (bridge B1b), connecting the 2 subunits; this bridge is implicated in subunit movement. Contacts the P site tRNA; the 5S rRNA and some of its associated proteins might help stabilize positioning of ribosome-bound tRNAs. In Helicobacter pylori (strain G27), this protein is Large ribosomal subunit protein uL5.